Reading from the N-terminus, the 33-residue chain is Protamine TP16 (33 aa).

The disordered stretch occupies residues 1–33; sequence MPRRRRSSSRPVRRRRRARVSRRRRRRGRRRRR.

In terms of tissue distribution, testis.

It is found in the nucleus. Its subcellular location is the chromosome. Its function is as follows. Protamines substitute for histones in the chromatin of sperm during the haploid phase of spermatogenesis. They compact sperm DNA into a highly condensed, stable and inactive complex. The chain is Protamine TP16 from Oncorhynchus mykiss (Rainbow trout).